Here is a 141-residue protein sequence, read N- to C-terminus: ATP synthase epsilon chain 1 (141 aa).

The protein belongs to the ATPase epsilon chain family. As to quaternary structure, F-type ATPases have 2 components, CF(1) - the catalytic core - and CF(0) - the membrane proton channel. CF(1) has five subunits: alpha(3), beta(3), gamma(1), delta(1), epsilon(1). CF(0) has three main subunits: a, b and c.

It localises to the cell inner membrane. Functionally, produces ATP from ADP in the presence of a proton gradient across the membrane. The protein is ATP synthase epsilon chain 1 of Thiobacillus denitrificans (strain ATCC 25259 / T1).